Reading from the N-terminus, the 937-residue chain is MRCIVSYKSLRSCLVNVPELLLESISEPVQNYAVQAVVCKNDIKKTFYFGISGIPSQFSFEIDSTYAHTLKLAENQEINLSIIDCTHEIEQLEIEPVTSNDWEIAERNAAWLEENLLVQYRVATTERFIIYLPSGTFIQFQPLKLIPSSLCGRLLRTTEVLITPKPNTSAIEVKENRKVNLRCVVENRLLPDSVTADSPALCVFLPLNFPDRPDVVYMDGGNLKSTIVCQCVSCPFQIPGHFFISKSLALSYSIKTGFKFQIWKAHNPPSSSKFILEQKGLPPESNLSSELVAAKLKNSYLMDGMTLKLVDIAVSYSVSGLSGVVKNPIQDIKITSDTNVPVNAGIRNNSPRLSMQPFPHEFAQVRNAVFLHQNIYINGPKGCGKSNLVHSLFDYYSLNSIYFQMIVSCSEIDRSSFAKFQSFWNNVFIQAERYEPSIIYLDDVHCLISSSNENGELGFVEEREIAFLQHQIINLKRKRKIIFIGFGEEFLTFSENLVLPLLFQIKIALPSLAVTRRKEILTTIFQENFSDITMDSIEFISVKTEGYLMTDLVLFVKRLLSEAFVEKIQNGPKHLMNKGLIEKTLKDFVPLQLRKAKFVKSSIRWIDIAGMQEAKEAVRDIIESPVKYSLIYKQCRLRLPTGILLFGYPGCGKTYLASAISSTFPVQFISIKGPELLDKYIGKSEQGVRDLFSRAQMAKPCVLFFDEFDSVAPRRGQDSTGVTDRVVNQILTQMDGAESLDGVYIVAATTRPDMIDPALLRPGRLDKLIFCDLPNEEERLEVLQKLANRFHIENAAMLKKLSTLTDGYTYADLSSLLYDAHLIAVHKLLKRVSINAVDPSQTTSSFTNLTTESKRNASMLALPPESRYNQNMQSMSDSKSVVIEDYMLMEALKKNSPSLNSEEFEHLSNLYRDFRSKLFEPELNARNTDVGSKTRQI.

ATP-binding positions include G379 to S386 and G647 to T654.

It belongs to the AAA ATPase family. As to quaternary structure, interacts with pex6; forming the pex1-pex6 AAA ATPase complex, which is composed of a heterohexamer formed by a trimer of pex1-pex6 dimers.

The protein localises to the cytoplasm. The protein resides in the cytosol. It is found in the peroxisome membrane. The catalysed reaction is ATP + H2O = ADP + phosphate + H(+). Functionally, component of the pex1-pex6 AAA ATPase complex, a protein dislocase complex that mediates the ATP-dependent extraction of the pex5 receptor from peroxisomal membranes, an essential step for pex5 recycling. Specifically recognizes pex5 monoubiquitinated at 'Cys-6', and pulls it out of the peroxisome lumen through the pex2-pex10-pex12 retrotranslocation channel. Extraction by the pex1-pex6 AAA ATPase complex is accompanied by unfolding of the TPR repeats and release of bound cargo from pex5. The polypeptide is Peroxisomal ATPase pex1 (pex1) (Schizosaccharomyces pombe (strain 972 / ATCC 24843) (Fission yeast)).